A 176-amino-acid chain; its full sequence is F(420)H(2) dehydrogenase subunit J (176 aa).

The next 5 membrane-spanning stretches (helical) occupy residues 13–33 (TAVF…VVIA), 39–59 (AGLA…LLNA), 64–84 (VIQV…AVML), 99–119 (PLAF…AFGT), and 140–160 (IGML…IVLL).

It belongs to the complex I subunit 6 family. As to quaternary structure, the FPO complex is composed of at least 13 different subunits. FpoA, FpoH, FpoJ, FpoK, FpoL, FpoM and FpoN proteins constitute the membrane sector of the complex.

Its subcellular location is the cell membrane. The enzyme catalyses methanophenazine + reduced coenzyme F420-(gamma-L-Glu)(n) = dihydromethanophenazine + oxidized coenzyme F420-(gamma-L-Glu)(n) + H(+). Its function is as follows. Component of the F(420)H(2) dehydrogenase (FPO complex) which is part of the energy-conserving F(420)H(2):heterodisulfide oxidoreductase system. The membrane-bound electron transfer system of the complex plays an important role in the metabolism of methylotrophic methanogens when the organisms grow on methanol or methylamines. Catalyzes the oxidation of methanophenazine to dihydromethanophenazine. It shuttles electrons from F(420)H(2), via FAD and iron-sulfur (Fe-S) centers, to methanophenazine (an electron carrier in the membrane). It couples the redox reaction to proton translocation (for every two electrons transferred, two hydrogen ions are translocated across the cytoplasmic membrane), and thus conserves the redox energy in a proton gradient. It also catalyzes the oxidation of F(420)H(2) with quinones such as 2,3-dimethyl-1,4-naphthoquinone, 2-methyl-1,4-naphthoquinone and tetramethyl-p-benzoquinone. The protein is F(420)H(2) dehydrogenase subunit J (fpoJ) of Methanosarcina mazei (strain ATCC BAA-159 / DSM 3647 / Goe1 / Go1 / JCM 11833 / OCM 88) (Methanosarcina frisia).